The sequence spans 239 residues: Proteasome activator complex subunit 2 (239 aa).

A2 is subject to N-acetylalanine. S10 is modified (phosphoserine).

This sequence belongs to the PA28 family. In terms of assembly, heterodimer of PSME1 and PSME2, which forms a hexameric ring.

Its function is as follows. Implicated in immunoproteasome assembly and required for efficient antigen processing. The PA28 activator complex enhances the generation of class I binding peptides by altering the cleavage pattern of the proteasome. The protein is Proteasome activator complex subunit 2 (PSME2) of Homo sapiens (Human).